A 238-amino-acid chain; its full sequence is uncharacterized protein (238 aa).

7 helical membrane passes run 22 to 42 (VYGW…GLYA), 49 to 69 (LFSL…YIQA), 78 to 98 (AVMG…GTMV), 105 to 125 (FGGG…GLSA), 141 to 161 (ILML…VVSL), 166 to 186 (PLMY…LTVV), and 208 to 228 (LSLI…WYLL).

The protein belongs to the BI1 family.

It is found in the cell membrane. This is an uncharacterized protein from Chlamydia muridarum (strain MoPn / Nigg).